A 188-amino-acid chain; its full sequence is UPF0301 protein ABO_0112 (188 aa).

This sequence belongs to the UPF0301 (AlgH) family.

This is UPF0301 protein ABO_0112 from Alcanivorax borkumensis (strain ATCC 700651 / DSM 11573 / NCIMB 13689 / SK2).